The sequence spans 62 residues: Photosystem II reaction center protein Z (62 aa).

The next 2 helical transmembrane spans lie at 8–28 and 41–61; these read AVFA…VVFA and FSGT…NSLI.

It belongs to the PsbZ family. PSII is composed of 1 copy each of membrane proteins PsbA, PsbB, PsbC, PsbD, PsbE, PsbF, PsbH, PsbI, PsbJ, PsbK, PsbL, PsbM, PsbT, PsbY, PsbZ, Psb30/Ycf12, at least 3 peripheral proteins of the oxygen-evolving complex and a large number of cofactors. It forms dimeric complexes.

Its subcellular location is the plastid. It localises to the chloroplast thylakoid membrane. May control the interaction of photosystem II (PSII) cores with the light-harvesting antenna, regulates electron flow through the 2 photosystem reaction centers. PSII is a light-driven water plastoquinone oxidoreductase, using light energy to abstract electrons from H(2)O, generating a proton gradient subsequently used for ATP formation. The protein is Photosystem II reaction center protein Z of Vitis vinifera (Grape).